A 1202-amino-acid chain; its full sequence is Ribonuclease P protein component, mitochondrial (1202 aa).

The transit peptide at 1–122 (MAFKSFIYSK…NNNNNQHRYY (122 aa)) directs the protein to the mitochondrion. The disordered stretch occupies residues 109-134 (NYVNNNNNNQHRYYSTGPTLPTNQYD). Over residues 118–134 (QHRYYSTGPTLPTNQYD) the composition is skewed to polar residues.

In terms of assembly, consists of an RNA moiety (RPM1) and the protein component (RPM2). Both are necessary for full enzymatic activity.

The protein localises to the mitochondrion. The catalysed reaction is Endonucleolytic cleavage of RNA, removing 5'-extranucleotides from tRNA precursor.. Ribonuclease P generates mature tRNA molecules by cleaving their 5'-ends. This is Ribonuclease P protein component, mitochondrial (RPM2) from Saccharomyces cerevisiae (strain ATCC 204508 / S288c) (Baker's yeast).